A 219-amino-acid chain; its full sequence is Orotate phosphoribosyltransferase (219 aa).

A 5-phospho-alpha-D-ribose 1-diphosphate-binding site is contributed by K26. 34-35 provides a ligand contact to orotate; that stretch reads FF. 5-phospho-alpha-D-ribose 1-diphosphate-binding positions include 72-73, R98, K99, K102, H104, and 124-132; these read YK and DDVITAGTA. Orotate contacts are provided by T128 and R156.

The protein belongs to the purine/pyrimidine phosphoribosyltransferase family. PyrE subfamily. Homodimer. It depends on Mg(2+) as a cofactor.

It carries out the reaction orotidine 5'-phosphate + diphosphate = orotate + 5-phospho-alpha-D-ribose 1-diphosphate. Its pathway is pyrimidine metabolism; UMP biosynthesis via de novo pathway; UMP from orotate: step 1/2. Its function is as follows. Catalyzes the transfer of a ribosyl phosphate group from 5-phosphoribose 1-diphosphate to orotate, leading to the formation of orotidine monophosphate (OMP). This chain is Orotate phosphoribosyltransferase, found in Xanthomonas campestris pv. campestris (strain 8004).